The primary structure comprises 258 residues: MAVGKNKRLTKGKKGQKKKIIDPFTKKDWYDVKAPSQFAVRNIGKTLVNRTSGTKIASDGLKGRVFEVSLADLQNGEIAFRKFRLIAEEVLGKSVLTNFHGMSMTSDKLKSLVKKWQTLIEAHIDAKTTDGYLLRFFAIGFTKKRPNQIKKTAYAKTSQCRSIRKKMTDIITREVSAIDLKEVVNRLIPDSIGKDIEKSCQSIYPLHDVYIRKVKVLKKPKLDTAKLLELHGEGVASSGDAGSAVRRDGYEPPVQESV.

Positions 235 to 258 (VASSGDAGSAVRRDGYEPPVQESV) are disordered.

Belongs to the eukaryotic ribosomal protein eS1 family. As to quaternary structure, component of the small ribosomal subunit. Mature ribosomes consist of a small (40S) and a large (60S) subunit. The 40S subunit contains about 33 different proteins and 1 molecule of RNA (18S). The 60S subunit contains about 49 different proteins and 3 molecules of RNA (28S, 5.8S and 5S).

Its subcellular location is the cytoplasm. This Trichoplax adhaerens (Trichoplax reptans) protein is Small ribosomal subunit protein eS1.